The sequence spans 548 residues: Glucose-6-phosphate isomerase 1 (548 aa).

E353 functions as the Proton donor in the catalytic mechanism. Active-site residues include H384 and K512.

Belongs to the GPI family.

It localises to the cytoplasm. The enzyme catalyses alpha-D-glucose 6-phosphate = beta-D-fructose 6-phosphate. It participates in carbohydrate biosynthesis; gluconeogenesis. Its pathway is carbohydrate degradation; glycolysis; D-glyceraldehyde 3-phosphate and glycerone phosphate from D-glucose: step 2/4. Functionally, catalyzes the reversible isomerization of glucose-6-phosphate to fructose-6-phosphate. In Neisseria meningitidis serogroup A / serotype 4A (strain DSM 15465 / Z2491), this protein is Glucose-6-phosphate isomerase 1.